A 148-amino-acid polypeptide reads, in one-letter code: WGDSSSSASACWSCSSPLSGTEAGVCCPLGWSGYDQNCYKAFEELMNWADAEKFCTQQHKGSHLVSLHNIAEADFVVKKIVSVLKDGVIWMGLNDVWNECNWGWTDGAQLDYKAWNVESNCFIFKTAENHWSRTDCSGTHSFVCKSPA.

A signal peptide spans 1 to 23 (WGDSSSSASACWSCSSPLSGTEA). Disulfide bonds link cysteine 27–cysteine 38, cysteine 55–cysteine 144, and cysteine 121–cysteine 136. One can recognise a C-type lectin domain in the interval 34–145 (YDQNCYKAFE…CSGTHSFVCK (112 aa)).

It belongs to the snaclec family. Heterodimer; disulfide-linked. In terms of tissue distribution, expressed by the venom gland.

It localises to the secreted. In terms of biological role, interferes with one step of hemostasis (modulation of platelet aggregation, or coagulation cascade, for example). In Echis carinatus sochureki (Saw-scaled viper), this protein is Snaclec 3.